Reading from the N-terminus, the 211-residue chain is Redox-sensing transcriptional repressor Rex (211 aa).

The H-T-H motif DNA-binding region spans 17-56 (KYHRYLEELMKNEVDRISSKELGEKIGFTASQIRQDLNCF). 91 to 96 (GAGNIG) contacts NAD(+).

It belongs to the transcriptional regulatory Rex family. Homodimer.

The protein localises to the cytoplasm. Modulates transcription in response to changes in cellular NADH/NAD(+) redox state. The protein is Redox-sensing transcriptional repressor Rex of Clostridium beijerinckii (strain ATCC 51743 / NCIMB 8052) (Clostridium acetobutylicum).